The following is a 373-amino-acid chain: Chaperone protein DnaJ (373 aa).

One can recognise a J domain in the interval 4 to 69; that stretch reads SYYEILEITQ…EKRAIYDRYG (66 aa). A CR-type zinc finger spans residues 135–212; sequence GCKKNIDFTY…CKGLGYNESK (78 aa). The Zn(2+) site is built by cysteine 148, cysteine 151, cysteine 164, cysteine 167, cysteine 186, cysteine 189, cysteine 200, and cysteine 203. CXXCXGXG motif repeat units lie at residues 148–155, 164–171, 186–193, and 200–207; these read CKTCNGTG, CPKCQGRG, CPDCQGIG, and CSDCKGLG.

This sequence belongs to the DnaJ family. Homodimer. Zn(2+) serves as cofactor.

The protein localises to the cytoplasm. Participates actively in the response to hyperosmotic and heat shock by preventing the aggregation of stress-denatured proteins and by disaggregating proteins, also in an autonomous, DnaK-independent fashion. Unfolded proteins bind initially to DnaJ; upon interaction with the DnaJ-bound protein, DnaK hydrolyzes its bound ATP, resulting in the formation of a stable complex. GrpE releases ADP from DnaK; ATP binding to DnaK triggers the release of the substrate protein, thus completing the reaction cycle. Several rounds of ATP-dependent interactions between DnaJ, DnaK and GrpE are required for fully efficient folding. Also involved, together with DnaK and GrpE, in the DNA replication of plasmids through activation of initiation proteins. In Campylobacter jejuni subsp. jejuni serotype O:2 (strain ATCC 700819 / NCTC 11168), this protein is Chaperone protein DnaJ.